The sequence spans 318 residues: Protein teg (318 aa).

The region spanning 7 to 182 (ITFDGGGTLG…VATNTSTASI (176 aa)) is the PNPLA domain. Positions 11 to 16 (GGGTLG) match the GXGXXG motif. The GXSXG signature appears at 42 to 46 (GNSIG). Catalysis depends on Ser-44, which acts as the Nucleophile. Residue Asp-169 is the Proton acceptor of the active site.

Its function is as follows. Probable lipid hydrolase. This Priestia megaterium (strain ATCC 14581 / DSM 32 / CCUG 1817 / JCM 2506 / NBRC 15308 / NCIMB 9376 / NCTC 10342 / NRRL B-14308 / VKM B-512 / Ford 19) (Bacillus megaterium) protein is Protein teg (teg).